Consider the following 347-residue polypeptide: Holliday junction branch migration complex subunit RuvB (347 aa).

Residues 1–186 (MKDENSISFL…FGITARFELY (186 aa)) form a large ATPase domain (RuvB-L) region. ATP contacts are provided by residues Leu-25, Arg-26, Gly-67, Lys-70, Thr-71, Thr-72, 133 to 135 (EDY), Arg-176, Tyr-186, and Arg-223. Thr-71 serves as a coordination point for Mg(2+). The segment at 187–257 (SEIELVEIIK…IVSIGLEMLR (71 aa)) is small ATPAse domain (RuvB-S). Residues 260 to 347 (GEGLDEQDRN…GLNENQRVSF (88 aa)) are head domain (RuvB-H). 2 residues coordinate DNA: Arg-315 and Arg-320.

The protein belongs to the RuvB family. In terms of assembly, homohexamer. Forms an RuvA(8)-RuvB(12)-Holliday junction (HJ) complex. HJ DNA is sandwiched between 2 RuvA tetramers; dsDNA enters through RuvA and exits via RuvB. An RuvB hexamer assembles on each DNA strand where it exits the tetramer. Each RuvB hexamer is contacted by two RuvA subunits (via domain III) on 2 adjacent RuvB subunits; this complex drives branch migration. In the full resolvosome a probable DNA-RuvA(4)-RuvB(12)-RuvC(2) complex forms which resolves the HJ.

The protein resides in the cytoplasm. It catalyses the reaction ATP + H2O = ADP + phosphate + H(+). The RuvA-RuvB-RuvC complex processes Holliday junction (HJ) DNA during genetic recombination and DNA repair, while the RuvA-RuvB complex plays an important role in the rescue of blocked DNA replication forks via replication fork reversal (RFR). RuvA specifically binds to HJ cruciform DNA, conferring on it an open structure. The RuvB hexamer acts as an ATP-dependent pump, pulling dsDNA into and through the RuvAB complex. RuvB forms 2 homohexamers on either side of HJ DNA bound by 1 or 2 RuvA tetramers; 4 subunits per hexamer contact DNA at a time. Coordinated motions by a converter formed by DNA-disengaged RuvB subunits stimulates ATP hydrolysis and nucleotide exchange. Immobilization of the converter enables RuvB to convert the ATP-contained energy into a lever motion, pulling 2 nucleotides of DNA out of the RuvA tetramer per ATP hydrolyzed, thus driving DNA branch migration. The RuvB motors rotate together with the DNA substrate, which together with the progressing nucleotide cycle form the mechanistic basis for DNA recombination by continuous HJ branch migration. Branch migration allows RuvC to scan DNA until it finds its consensus sequence, where it cleaves and resolves cruciform DNA. The chain is Holliday junction branch migration complex subunit RuvB from Borreliella burgdorferi (strain ATCC 35210 / DSM 4680 / CIP 102532 / B31) (Borrelia burgdorferi).